We begin with the raw amino-acid sequence, 179 residues long: uncharacterized protein (179 aa).

It localises to the virion. This is an uncharacterized protein from Acanthamoeba polyphaga (Amoeba).